We begin with the raw amino-acid sequence, 189 residues long: Urease accessory protein UreF (189 aa).

Belongs to the UreF family. In terms of assembly, ureD, UreF and UreG form a complex that acts as a GTP-hydrolysis-dependent molecular chaperone, activating the urease apoprotein by helping to assemble the nickel containing metallocenter of UreC. The UreE protein probably delivers the nickel.

The protein localises to the cytoplasm. Required for maturation of urease via the functional incorporation of the urease nickel metallocenter. The polypeptide is Urease accessory protein UreF (Staphylococcus xylosus).